The chain runs to 182 residues: Adenine phosphoribosyltransferase (182 aa).

Belongs to the purine/pyrimidine phosphoribosyltransferase family. In terms of assembly, homodimer.

It localises to the cytoplasm. It carries out the reaction AMP + diphosphate = 5-phospho-alpha-D-ribose 1-diphosphate + adenine. It participates in purine metabolism; AMP biosynthesis via salvage pathway; AMP from adenine: step 1/1. Its function is as follows. Catalyzes a salvage reaction resulting in the formation of AMP, that is energically less costly than de novo synthesis. This Shewanella frigidimarina (strain NCIMB 400) protein is Adenine phosphoribosyltransferase.